Reading from the N-terminus, the 168-residue chain is Pathogenesis-related protein 1B (168 aa).

Positions 1–30 (MGFFLFSQMPSFFLVSTLLLFLIISHSSHA) are cleaved as a signal peptide. An SCP domain is found at 38–156 (LDAHNTARAD…NGGYVVSCNY (119 aa)).

Belongs to the CRISP family. In terms of processing, three disulfide bonds are present.

Its subcellular location is the vacuole. Its function is as follows. Probably involved in the defense reaction of plants against pathogens. This chain is Pathogenesis-related protein 1B, found in Nicotiana tabacum (Common tobacco).